The following is a 337-amino-acid chain: F-box protein At2g27310 (337 aa).

Residues 10-58 form the F-box domain; the sequence is DSISTLHSDIIQTQILTRLDGPTLASTATTSSYLQTLCTEEKLWQELSI.

The polypeptide is F-box protein At2g27310 (Arabidopsis thaliana (Mouse-ear cress)).